A 185-amino-acid polypeptide reads, in one-letter code: Pyruvate/ketoisovalerate oxidoreductases common subunit gamma (185 aa).

In terms of assembly, heterotetramer of one alpha, one beta, one delta and one gamma chain.

The enzyme catalyses 2 oxidized [2Fe-2S]-[ferredoxin] + pyruvate + CoA = 2 reduced [2Fe-2S]-[ferredoxin] + acetyl-CoA + CO2 + H(+). The catalysed reaction is 3-methyl-2-oxobutanoate + 2 oxidized [2Fe-2S]-[ferredoxin] + CoA = 2-methylpropanoyl-CoA + 2 reduced [2Fe-2S]-[ferredoxin] + CO2 + H(+). In Pyrococcus abyssi (strain GE5 / Orsay), this protein is Pyruvate/ketoisovalerate oxidoreductases common subunit gamma (porG).